A 310-amino-acid polypeptide reads, in one-letter code: Transcription initiation factor IIB (310 aa).

The TFIIB-type zinc-finger motif lies at 9–41; that stretch reads DKQTVCPECGSTELIGDYERAEVVCAHCGLVID. 4 residues coordinate Zn(2+): cysteine 14, cysteine 17, cysteine 33, and cysteine 36. 2 consecutive repeat copies span residues 127-210 and 221-302.

It belongs to the TFIIB family.

Functionally, stabilizes TBP binding to an archaeal box-A promoter. Also responsible for recruiting RNA polymerase II to the pre-initiation complex (DNA-TBP-TFIIB). The polypeptide is Transcription initiation factor IIB (Methanobrevibacter smithii (strain ATCC 35061 / DSM 861 / OCM 144 / PS)).